We begin with the raw amino-acid sequence, 275 residues long: Phosphate import ATP-binding protein PstB (275 aa).

Positions 28 to 270 constitute an ABC transporter domain; the sequence is MSAKNVSVFY…PREERTKDYI (243 aa). Position 60 to 67 (60 to 67) interacts with ATP; the sequence is GPSGCGKS.

It belongs to the ABC transporter superfamily. Phosphate importer (TC 3.A.1.7) family. In terms of assembly, the complex is composed of two ATP-binding proteins (PstB), two transmembrane proteins (PstC and PstA) and a solute-binding protein (PstS).

The protein localises to the cell inner membrane. It carries out the reaction phosphate(out) + ATP + H2O = ADP + 2 phosphate(in) + H(+). Functionally, part of the ABC transporter complex PstSACB involved in phosphate import. Responsible for energy coupling to the transport system. In Novosphingobium aromaticivorans (strain ATCC 700278 / DSM 12444 / CCUG 56034 / CIP 105152 / NBRC 16084 / F199), this protein is Phosphate import ATP-binding protein PstB.